We begin with the raw amino-acid sequence, 384 residues long: MSEQLVTPENVTTKDGKINLLDLNRQQMREFFKDLGEKPFRADQVMKWMYHYCCDNFDEMTDINKVLRGKLKEVAEIRAPEVVEEQRSSDGTIKWAIAVGDQRVETVYIPEDDRATLCVSSQVGCALECKFCSTAQQGFNRNLRVSEIIGQVWRAAKIVGAAKVTGQRPITNVVMMGMGEPLLNLNNVVPAMEIMLDDFGFGLSKRRVTLSTSGVVPALDKLGDMIDVALAISLHAPNDEIRDEIVPINKKYNIETFLAAVRRYLEKSNANQGRVTIEYVMLDHVNDGTEHAHQLAELLKDTPCKINLIPWNPFPAAPYGRSSNSRIDRFSKVLMSYGFTTIVRKTRGDDIDAACGQLAGDVIDRTKRTLRKRMQGEAIDIKAV.

E105 acts as the Proton acceptor in catalysis. One can recognise a Radical SAM core domain in the interval 111-350; that stretch reads EDDRATLCVS…TIVRKTRGDD (240 aa). C118 and C355 form a disulfide bridge. 3 residues coordinate [4Fe-4S] cluster: C125, C129, and C132. Residues 179 to 180, S211, 233 to 235, and N312 each bind S-adenosyl-L-methionine; these read GE and SLH. C355 functions as the S-methylcysteine intermediate in the catalytic mechanism.

This sequence belongs to the radical SAM superfamily. RlmN family. [4Fe-4S] cluster is required as a cofactor.

The protein localises to the cytoplasm. It carries out the reaction adenosine(2503) in 23S rRNA + 2 reduced [2Fe-2S]-[ferredoxin] + 2 S-adenosyl-L-methionine = 2-methyladenosine(2503) in 23S rRNA + 5'-deoxyadenosine + L-methionine + 2 oxidized [2Fe-2S]-[ferredoxin] + S-adenosyl-L-homocysteine. It catalyses the reaction adenosine(37) in tRNA + 2 reduced [2Fe-2S]-[ferredoxin] + 2 S-adenosyl-L-methionine = 2-methyladenosine(37) in tRNA + 5'-deoxyadenosine + L-methionine + 2 oxidized [2Fe-2S]-[ferredoxin] + S-adenosyl-L-homocysteine. Its function is as follows. Specifically methylates position 2 of adenine 2503 in 23S rRNA and position 2 of adenine 37 in tRNAs. m2A2503 modification seems to play a crucial role in the proofreading step occurring at the peptidyl transferase center and thus would serve to optimize ribosomal fidelity. In Escherichia coli O157:H7, this protein is Dual-specificity RNA methyltransferase RlmN.